The following is a 301-amino-acid chain: Sulfate adenylyltransferase subunit 2 (301 aa).

Belongs to the PAPS reductase family. CysD subfamily. In terms of assembly, heterodimer composed of CysD, the smaller subunit, and CysN.

It catalyses the reaction sulfate + ATP + H(+) = adenosine 5'-phosphosulfate + diphosphate. It participates in sulfur metabolism; hydrogen sulfide biosynthesis; sulfite from sulfate: step 1/3. Functionally, with CysN forms the ATP sulfurylase (ATPS) that catalyzes the adenylation of sulfate producing adenosine 5'-phosphosulfate (APS) and diphosphate, the first enzymatic step in sulfur assimilation pathway. APS synthesis involves the formation of a high-energy phosphoric-sulfuric acid anhydride bond driven by GTP hydrolysis by CysN coupled to ATP hydrolysis by CysD. The protein is Sulfate adenylyltransferase subunit 2 of Geotalea daltonii (strain DSM 22248 / JCM 15807 / FRC-32) (Geobacter daltonii).